The chain runs to 339 residues: D-erythrose-4-phosphate dehydrogenase (339 aa).

11 to 12 (RI) is an NAD(+) binding site. Substrate-binding positions include 158–160 (SCT), Arg-204, 217–218 (TK), and Arg-240. Cys-159 serves as the catalytic Nucleophile. Position 322 (Asn-322) interacts with NAD(+).

It belongs to the glyceraldehyde-3-phosphate dehydrogenase family. Epd subfamily. As to quaternary structure, homotetramer.

It localises to the cytoplasm. The enzyme catalyses D-erythrose 4-phosphate + NAD(+) + H2O = 4-phospho-D-erythronate + NADH + 2 H(+). It functions in the pathway cofactor biosynthesis; pyridoxine 5'-phosphate biosynthesis; pyridoxine 5'-phosphate from D-erythrose 4-phosphate: step 1/5. In terms of biological role, catalyzes the NAD-dependent conversion of D-erythrose 4-phosphate to 4-phosphoerythronate. The protein is D-erythrose-4-phosphate dehydrogenase of Aliivibrio fischeri (strain ATCC 700601 / ES114) (Vibrio fischeri).